We begin with the raw amino-acid sequence, 455 residues long: Golgi pH regulator (455 aa).

The next 5 membrane-spanning stretches (helical) occupy residues 5 to 25, 46 to 66, 79 to 99, 114 to 134, and 150 to 170; these read IDSSIMITSQILFFGFGWLFF, VTFAFSCTMFELIIFEILGVL, LCVILLILVFMVPFYIGYFIV, CLLWLTFMYFFWKLGDPFPIL, and VGVIGVTLMALLSGFGAVNCP. Residues asparagine 180 and asparagine 243 are each glycosylated (N-linked (GlcNAc...) asparagine). 4 consecutive transmembrane segments (helical) span residues 290-310, 343-363, 378-398, and 425-445; these read GYFFSIYCVWKIFMATINIVF, ISFILVGIIIVTSIRGLLITL, VIVLLLAQIMGMYFVSSVLLI, and WFDVIFLVSALSSILFLYLAH.

It belongs to the Golgi pH regulator (TC 1.A.38) family. As to quaternary structure, homotrimer. Interacts with RABL3; the interaction stabilizes GPR89A.

Its subcellular location is the golgi apparatus membrane. It catalyses the reaction iodide(out) = iodide(in). The enzyme catalyses chloride(in) = chloride(out). It carries out the reaction bromide(in) = bromide(out). The catalysed reaction is fluoride(in) = fluoride(out). In terms of biological role, voltage-gated channel that enables the transfer of monoatomic anions such as iodide, chloride, bromide and fluoride which may function in counter-ion conductance and participates in Golgi acidification. Plays a role in lymphocyte development, probably by acting as a RABL3 effector in hematopoietic cells. The protein is Golgi pH regulator of Bos taurus (Bovine).